A 462-amino-acid chain; its full sequence is NAD-capped RNA hydrolase NUDT12 (462 aa).

3 ANK repeats span residues 11–40 (EIVT…SLLN), 45–74 (NGWT…DRSI), and 78–98 (SRQT…ANLL). Lys-185 is subject to N6-succinyllysine. Residues Cys-284 and Cys-287 each contribute to the Zn(2+) site. Position 292 is an N6-succinyllysine (Lys-292). Zn(2+) contacts are provided by Cys-302 and Cys-307. Substrate is bound by residues Tyr-318, 354-356 (AGF), Glu-370, Glu-374, and Glu-415. Positions 319-453 (PRVDPVVIMQ…SRAIAHQLIK (135 aa)) constitute a Nudix hydrolase domain. The Mg(2+) site is built by Ala-354, Glu-370, Glu-374, and Glu-415. The Nudix box motif lies at 355–376 (GFIEPGETIEDAVRREVEEESG). Residues 460-462 (PNL) carry the Microbody targeting signal motif.

Belongs to the Nudix hydrolase family. NudC subfamily. In terms of assembly, homodimer. Homodimerization is essential for its catalytic activity and protein stability. Interacts (via ANK repeats) with BLMH. Requires Mg(2+) as cofactor. The cofactor is Zn(2+).

The protein localises to the cytoplasm. It is found in the peroxisome. It localises to the cytoplasmic granule. It catalyses the reaction a 5'-end NAD(+)-phospho-ribonucleoside in mRNA + H2O = a 5'-end phospho-adenosine-phospho-ribonucleoside in mRNA + beta-nicotinamide D-ribonucleotide + 2 H(+). The catalysed reaction is NAD(+) + H2O = beta-nicotinamide D-ribonucleotide + AMP + 2 H(+). It carries out the reaction NADH + H2O = reduced beta-nicotinamide D-ribonucleotide + AMP + 2 H(+). The enzyme catalyses NADPH + H2O = reduced beta-nicotinamide D-ribonucleotide + adenosine 2',5'-bisphosphate + 2 H(+). MRNA decapping enzyme that specifically removes the nicotinamide adenine dinucleotide (NAD) cap from a subset of mRNAs by hydrolyzing the diphosphate linkage to produce nicotinamide mononucleotide (NMN) and 5' monophosphate mRNA. The NAD-cap is present at the 5'-end of some RNAs; in contrast to the canonical N7 methylguanosine (m7G) cap, the NAD cap promotes mRNA decay. Preferentially acts on NAD-capped transcripts in response to nutrient stress. Also acts on free nicotinamide adenine dinucleotide molecules: hydrolyzes NAD(H) into NMN(H) and AMP, and NADPH into NMNH and 2',5'-ADP. May act to regulate the concentration of peroxisomal nicotinamide nucleotide cofactors required for oxidative metabolism in this organelle. Regulates the levels of circadian clock components PER1, PER2, PER3 and CRY2 in the liver. This is NAD-capped RNA hydrolase NUDT12 from Macaca fascicularis (Crab-eating macaque).